Consider the following 490-residue polypeptide: Adenylosuccinate lyase (490 aa).

The residue at position 2 (Ala-2) is an N-acetylalanine. Residues 26–27 (RY), 91–93 (RHD), and 117–118 (TS) each bind substrate. An N6-acetyllysine modification is found at Lys-153. The active-site Proton donor/acceptor is the His-165. Gln-247 lines the substrate pocket. Residue Ser-295 is the Proton donor/acceptor of the active site. Lys-301 carries the post-translational modification N6-acetyllysine. Residues Arg-309, Arg-335, Ser-340, and Arg-344 each coordinate substrate. A Glycyl lysine isopeptide (Lys-Gly) (interchain with G-Cter in SUMO1) cross-link involves residue Lys-421.

Belongs to the lyase 1 family. Adenylosuccinate lyase subfamily. Homotetramer. Residues from neighboring subunits contribute catalytic and substrate-binding residues to each active site.

It carries out the reaction N(6)-(1,2-dicarboxyethyl)-AMP = fumarate + AMP. It catalyses the reaction (2S)-2-[5-amino-1-(5-phospho-beta-D-ribosyl)imidazole-4-carboxamido]succinate = 5-amino-1-(5-phospho-beta-D-ribosyl)imidazole-4-carboxamide + fumarate. Its pathway is purine metabolism; AMP biosynthesis via de novo pathway; AMP from IMP: step 2/2. It participates in purine metabolism; IMP biosynthesis via de novo pathway; 5-amino-1-(5-phospho-D-ribosyl)imidazole-4-carboxamide from 5-amino-1-(5-phospho-D-ribosyl)imidazole-4-carboxylate: step 2/2. Its function is as follows. Catalyzes two non-sequential steps in de novo AMP synthesis: converts (S)-2-(5-amino-1-(5-phospho-D-ribosyl)imidazole-4-carboxamido)succinate (SAICAR) to fumarate plus 5-amino-1-(5-phospho-D-ribosyl)imidazole-4-carboxamide, and thereby also contributes to de novo IMP synthesis, and converts succinyladenosine monophosphate (SAMP) to AMP and fumarate. This is Adenylosuccinate lyase (ADSL) from Bos taurus (Bovine).